A 316-amino-acid polypeptide reads, in one-letter code: Ribosomal protein L11 methyltransferase (316 aa).

S-adenosyl-L-methionine-binding residues include threonine 157, glycine 178, aspartate 200, and asparagine 243.

The protein belongs to the methyltransferase superfamily. PrmA family.

It is found in the cytoplasm. It catalyses the reaction L-lysyl-[protein] + 3 S-adenosyl-L-methionine = N(6),N(6),N(6)-trimethyl-L-lysyl-[protein] + 3 S-adenosyl-L-homocysteine + 3 H(+). Functionally, methylates ribosomal protein L11. The sequence is that of Ribosomal protein L11 methyltransferase from Streptococcus pneumoniae (strain Hungary19A-6).